A 545-amino-acid chain; its full sequence is CTP synthase (545 aa).

The amidoligase domain stretch occupies residues 1–266 (MKTNYIFVTG…DDYICKRFSL (266 aa)). Ser-14 contacts CTP. A UTP-binding site is contributed by Ser-14. Residues 15-20 (SLGKGI) and Asp-72 contribute to the ATP site. The Mg(2+) site is built by Asp-72 and Glu-140. CTP-binding positions include 147-149 (DIE), 187-192 (KTKPTQ), and Lys-223. UTP-binding positions include 187–192 (KTKPTQ) and Lys-223. 239 to 241 (KDV) is a binding site for ATP. The Glutamine amidotransferase type-1 domain occupies 291-542 (TIGMVGKYVE…VKAAFDYQKG (252 aa)). Gly-352 serves as a coordination point for L-glutamine. Cys-379 acts as the Nucleophile; for glutamine hydrolysis in catalysis. L-glutamine-binding positions include 380–383 (LGMQ), Glu-403, and Arg-470. Catalysis depends on residues His-515 and Glu-517.

It belongs to the CTP synthase family. Homotetramer.

It catalyses the reaction UTP + L-glutamine + ATP + H2O = CTP + L-glutamate + ADP + phosphate + 2 H(+). The catalysed reaction is L-glutamine + H2O = L-glutamate + NH4(+). The enzyme catalyses UTP + NH4(+) + ATP = CTP + ADP + phosphate + 2 H(+). It participates in pyrimidine metabolism; CTP biosynthesis via de novo pathway; CTP from UDP: step 2/2. Allosterically activated by GTP, when glutamine is the substrate; GTP has no effect on the reaction when ammonia is the substrate. The allosteric effector GTP functions by stabilizing the protein conformation that binds the tetrahedral intermediate(s) formed during glutamine hydrolysis. Inhibited by the product CTP, via allosteric rather than competitive inhibition. In terms of biological role, catalyzes the ATP-dependent amination of UTP to CTP with either L-glutamine or ammonia as the source of nitrogen. Regulates intracellular CTP levels through interactions with the four ribonucleotide triphosphates. The chain is CTP synthase from Proteus mirabilis (strain HI4320).